The following is a 191-amino-acid chain: Succinoglycan biosynthesis protein ExoI (191 aa).

The tract at residues 1-21 is disordered; it reads MTRIKSAVAAGGRRAPHSARL.

It functions in the pathway glycan metabolism; exopolysaccharide biosynthesis. The sequence is that of Succinoglycan biosynthesis protein ExoI (exoI) from Rhizobium meliloti (strain 1021) (Ensifer meliloti).